Here is a 243-residue protein sequence, read N- to C-terminus: Probable transcriptional regulatory protein TTE1135 (243 aa).

The protein belongs to the TACO1 family.

The protein resides in the cytoplasm. The chain is Probable transcriptional regulatory protein TTE1135 from Caldanaerobacter subterraneus subsp. tengcongensis (strain DSM 15242 / JCM 11007 / NBRC 100824 / MB4) (Thermoanaerobacter tengcongensis).